The chain runs to 303 residues: tRNA pseudouridine synthase B (303 aa).

Asp38 serves as the catalytic Nucleophile.

This sequence belongs to the pseudouridine synthase TruB family. Type 1 subfamily.

The enzyme catalyses uridine(55) in tRNA = pseudouridine(55) in tRNA. Functionally, responsible for synthesis of pseudouridine from uracil-55 in the psi GC loop of transfer RNAs. The chain is tRNA pseudouridine synthase B from Levilactobacillus brevis (strain ATCC 367 / BCRC 12310 / CIP 105137 / JCM 1170 / LMG 11437 / NCIMB 947 / NCTC 947) (Lactobacillus brevis).